We begin with the raw amino-acid sequence, 747 residues long: DNA-directed RNA polymerase subunit beta' (747 aa).

Zn(2+) is bound by residues Cys-70, Cys-72, Cys-97, and Cys-100. Residues Asp-502, Asp-504, and Asp-506 each coordinate Mg(2+).

The protein belongs to the RNA polymerase beta' chain family. RpoC1 subfamily. In terms of assembly, in plastids the minimal PEP RNA polymerase catalytic core is composed of four subunits: alpha, beta, beta', and beta''. When a (nuclear-encoded) sigma factor is associated with the core the holoenzyme is formed, which can initiate transcription. Mg(2+) is required as a cofactor. It depends on Zn(2+) as a cofactor.

The protein resides in the plastid. It localises to the chloroplast. It carries out the reaction RNA(n) + a ribonucleoside 5'-triphosphate = RNA(n+1) + diphosphate. Its function is as follows. DNA-dependent RNA polymerase catalyzes the transcription of DNA into RNA using the four ribonucleoside triphosphates as substrates. The chain is DNA-directed RNA polymerase subunit beta' from Gnetum parvifolium (Small-leaved jointfir).